A 144-amino-acid polypeptide reads, in one-letter code: MAPKKKKVTGLIKLQIQAGQANPAPPVGPALGAHGVNIMEFCKAYNAATENQRGNVVPVEITVYEDRSFDFKLKTPPAAKLLLKAAGLQKGSGVPHTQKVGKVSMAQVREIAETKKEDLNARDIDAAAKIIAGTARSMGITVEG.

It belongs to the universal ribosomal protein uL11 family. As to quaternary structure, part of the ribosomal stalk of the 50S ribosomal subunit. Interacts with L10 and the large rRNA to form the base of the stalk. L10 forms an elongated spine to which L12 dimers bind in a sequential fashion forming a multimeric L10(L12)X complex. In terms of processing, one or more lysine residues are methylated.

In terms of biological role, forms part of the ribosomal stalk which helps the ribosome interact with GTP-bound translation factors. The chain is Large ribosomal subunit protein uL11 from Corynebacterium glutamicum (strain R).